Here is a 361-residue protein sequence, read N- to C-terminus: BBSome complex member bbs-5 (361 aa).

It belongs to the BBS5 family. Part of BBSome complex, that contains at least bbs-1, bbs-2, bbs-4, bbs-5, osm-12, bbs-8/ttc-8 and bbs-9. Interacts with bbs-4 (via C-terminus); the interaction is direct.

Its subcellular location is the cell projection. The protein resides in the cilium membrane. It localises to the cytoplasm. The protein localises to the cytoskeleton. It is found in the cilium basal body. Its subcellular location is the microtubule organizing center. The protein resides in the centrosome. It localises to the centriolar satellite. Component of the BBSome complex. The BBSome complex is thought to function as a coat complex required for sorting of specific membrane proteins to the primary cilia. The BBSome complex is required for ciliogenesis but is dispensable for centriolar satellite function. Required for BBSome complex ciliary localization but not for the proper complex assembly. Required, redundantly with bbs-4, for cilia biogenesis and both the assembly and movement of intraflagellar transport proteins along the ciliary axoneme. Plays a role in the removal of degraded mechanosensory receptors within the cilia. This Caenorhabditis elegans protein is BBSome complex member bbs-5.